Here is a 369-residue protein sequence, read N- to C-terminus: Pulmonary surfactant-associated protein D (369 aa).

Positions Met1 to Gly20 are cleaved as a signal peptide. S-nitrosocysteine is present on residues Cys35 and Cys40. Residues Ser41–Leu215 form a disordered region. The Collagen-like domain maps to Gly46–Ala216. Residues Leu47–Asp65 show a composition bias toward basic and acidic residues. At Pro78 the chain carries 4-hydroxyproline. Lys87 carries the 5-hydroxylysine modification. Residue Asn90 is glycosylated (N-linked (GlcNAc...) asparagine). 4-hydroxyproline is present on Pro96. Lys99 is modified (5-hydroxylysine). A compositionally biased stretch (gly residues) spans Gly139–Gly148. Pro165 and Pro171 each carry 4-hydroxyproline. Residues Pro165–Ala191 show a composition bias toward low complexity. Positions Lys198 to Lys210 are enriched in basic and acidic residues. The stretch at Glu217 to Phe248 forms a coiled coil. Residues Val254–Phe369 form the C-type lectin domain. Cystine bridges form between Cys275–Cys367 and Cys345–Cys359.

This sequence belongs to the SFTPD family. In terms of assembly, oligomeric complex of 4 set of homotrimers. Post-translationally, hydroxylation on proline residues within the sequence motif, GXPG, is most likely to be 4-hydroxy as this fits the requirement for 4-hydroxylation in vertebrates. S-nitrosylation at Cys-35 and Cys-40 alters the quaternary structure which results in a pro-inflammatory chemoattractive signaling activity with macrophages.

The protein resides in the secreted. It is found in the extracellular space. The protein localises to the extracellular matrix. It localises to the surface film. Contributes to the lung's defense against inhaled microorganisms, organic antigens and toxins. Interacts with compounds such as bacterial lipopolysaccharides, oligosaccharides and fatty acids and modulates leukocyte action in immune response. May participate in the extracellular reorganization or turnover of pulmonary surfactant. Binds strongly maltose residues and to a lesser extent other alpha-glucosyl moieties. This is Pulmonary surfactant-associated protein D (SFTPD) from Bos taurus (Bovine).